The following is a 137-amino-acid chain: Large ribosomal subunit protein uL16 (137 aa).

This sequence belongs to the universal ribosomal protein uL16 family. In terms of assembly, part of the 50S ribosomal subunit.

Binds 23S rRNA and is also seen to make contacts with the A and possibly P site tRNAs. This Acinetobacter baylyi (strain ATCC 33305 / BD413 / ADP1) protein is Large ribosomal subunit protein uL16.